A 420-amino-acid polypeptide reads, in one-letter code: Serine hydroxymethyltransferase (420 aa).

(6S)-5,6,7,8-tetrahydrofolate is bound by residues Leu-123 and Gly-127–Leu-129. Lys-232 carries the N6-(pyridoxal phosphate)lysine modification. Ser-357 to Phe-359 lines the (6S)-5,6,7,8-tetrahydrofolate pocket.

It belongs to the SHMT family. As to quaternary structure, homodimer. Requires pyridoxal 5'-phosphate as cofactor.

It localises to the cytoplasm. It catalyses the reaction (6R)-5,10-methylene-5,6,7,8-tetrahydrofolate + glycine + H2O = (6S)-5,6,7,8-tetrahydrofolate + L-serine. Its pathway is one-carbon metabolism; tetrahydrofolate interconversion. The protein operates within amino-acid biosynthesis; glycine biosynthesis; glycine from L-serine: step 1/1. Functionally, catalyzes the reversible interconversion of serine and glycine with tetrahydrofolate (THF) serving as the one-carbon carrier. This reaction serves as the major source of one-carbon groups required for the biosynthesis of purines, thymidylate, methionine, and other important biomolecules. Also exhibits THF-independent aldolase activity toward beta-hydroxyamino acids, producing glycine and aldehydes, via a retro-aldol mechanism. This chain is Serine hydroxymethyltransferase, found in Streptococcus pyogenes serotype M4 (strain MGAS10750).